The chain runs to 265 residues: MNIAIAGASGRMGRMLIEHILATEGVSLSGALDLPGSPALGQDAGLLLGRQTGVAITADLEAGLAGADCLIDFTRPEGTLAHLAVAKRLGVKMVIGTTGFDDAGKAALAEAAKSIGIVFAANMSVGVNATFKLLEVAAKLLSTGYDIEIIEAHHRFKVDAPSGTALKMGEVVAEALGRDLKTCAVYAREGHTGERDPNSIGFATVRGGDIVGDHTVMFAGIGERIEISHKSSSRQSYADGAVRAARFLADKPNGLFDMQDVLGLK.

Residues Gly7 to Met12, Asp33, Gly96 to Thr98, and Ala120 to Met123 each bind NAD(+). His153 acts as the Proton donor/acceptor in catalysis. His154 contacts (S)-2,3,4,5-tetrahydrodipicolinate. Lys157 acts as the Proton donor in catalysis. (S)-2,3,4,5-tetrahydrodipicolinate is bound at residue Gly163–Thr164.

It belongs to the DapB family.

The protein resides in the cytoplasm. It catalyses the reaction (S)-2,3,4,5-tetrahydrodipicolinate + NAD(+) + H2O = (2S,4S)-4-hydroxy-2,3,4,5-tetrahydrodipicolinate + NADH + H(+). The catalysed reaction is (S)-2,3,4,5-tetrahydrodipicolinate + NADP(+) + H2O = (2S,4S)-4-hydroxy-2,3,4,5-tetrahydrodipicolinate + NADPH + H(+). It participates in amino-acid biosynthesis; L-lysine biosynthesis via DAP pathway; (S)-tetrahydrodipicolinate from L-aspartate: step 4/4. In terms of biological role, catalyzes the conversion of 4-hydroxy-tetrahydrodipicolinate (HTPA) to tetrahydrodipicolinate. The sequence is that of 4-hydroxy-tetrahydrodipicolinate reductase from Cupriavidus pinatubonensis (strain JMP 134 / LMG 1197) (Cupriavidus necator (strain JMP 134)).